The primary structure comprises 117 residues: MRVKGGSITRQRRRRWLKLAKGYWGHKSIGFKTAKQAVVKSWTYAFRDRKQRKRDFRKLWISRINAAARNQGISYSQLMYKIKQSNIEINRKMLAEMAVHHQSDFENIVKLAIAKSA.

It belongs to the bacterial ribosomal protein bL20 family.

Its function is as follows. Binds directly to 23S ribosomal RNA and is necessary for the in vitro assembly process of the 50S ribosomal subunit. It is not involved in the protein synthesizing functions of that subunit. This is Large ribosomal subunit protein bL20 from Mesomycoplasma hyopneumoniae (strain 7448) (Mycoplasma hyopneumoniae).